A 282-amino-acid chain; its full sequence is Release factor glutamine methyltransferase (282 aa).

Residues 120-124 (GVGSG), Asp-143, and Asn-189 each bind S-adenosyl-L-methionine. 189–192 (NPPY) is a binding site for substrate.

It belongs to the protein N5-glutamine methyltransferase family. PrmC subfamily.

The catalysed reaction is L-glutaminyl-[peptide chain release factor] + S-adenosyl-L-methionine = N(5)-methyl-L-glutaminyl-[peptide chain release factor] + S-adenosyl-L-homocysteine + H(+). Functionally, methylates the class 1 translation termination release factors RF1/PrfA and RF2/PrfB on the glutamine residue of the universally conserved GGQ motif. This is Release factor glutamine methyltransferase from Dictyoglomus turgidum (strain DSM 6724 / Z-1310).